A 149-amino-acid chain; its full sequence is Transcriptional repressor NrdR (149 aa).

A zinc finger spans residues 3–34; sequence CPFCAAVDTKVIDSRLVSDGSQVRRRRQCLDC. Residues 49–139 form the ATP-cone domain; that stretch reads PRVIKSDDVR…VYRSFEDIRE (91 aa).

The protein belongs to the NrdR family. The cofactor is Zn(2+).

Negatively regulates transcription of bacterial ribonucleotide reductase nrd genes and operons by binding to NrdR-boxes. This is Transcriptional repressor NrdR from Yersinia enterocolitica serotype O:8 / biotype 1B (strain NCTC 13174 / 8081).